The chain runs to 334 residues: DGAT1/2-independent enzyme synthesizing storage lipids (334 aa).

Residues 1-50 (MTNKNQSFGVGQDSMSSMTCLIHVLEAWFGVEHLEDYWNFANYLLWVFTP) are Lumenal-facing. N-linked (GlcNAc...) asparagine glycosylation occurs at Asn-5. Residues 51–71 (LLLLILPYFTIFLLYLTIIFL) form a helical membrane-spanning segment. Topologically, residues 72–125 (HIYKRKNVLKEAYSHNLWDGARKTVATLWDGHAAVWHGYEVHGMEKIPEEGPAL) are cytoplasmic. Residues 126-146 (IIFYHGAIPIDFYYFMAKIFI) traverse the membrane as a helical segment. His-130 is a catalytic residue. Residues 147-334 (HKGRTCRVVA…NKQKINQKTL (188 aa)) lie on the Lumenal side of the membrane.

Belongs to the diacylglycerol acyltransferase family. Highly divergent.

The protein localises to the endoplasmic reticulum membrane. The enzyme catalyses a 1,2-diacylglycerol + a 1,2-diacyl-sn-glycero-3-phosphocholine = a triacylglycerol + a 1-acyl-sn-glycero-3-phosphocholine. It catalyses the reaction a 1-O-alkyl-2-acyl-sn-glycero-3-phosphocholine + a 1,2-diacylglycerol = a 1-O-alkyl-sn-glycero-3-phosphocholine + a triacylglycerol. It carries out the reaction a 2-acylglycerol + an acyl-CoA = a 1,2-diacylglycerol + CoA. The catalysed reaction is an acyl-CoA + a 1,2-diacyl-sn-glycerol = a triacyl-sn-glycerol + CoA. The enzyme catalyses 2-(9Z-octadecenoyl)-glycerol + (9Z)-octadecenoyl-CoA = 1,2-di-(9Z-octadecenoyl)-glycerol + CoA. It catalyses the reaction 1,2-di-(9Z-octadecenoyl)-sn-glycerol + (9Z)-octadecenoyl-CoA = 1,2,3-tri-(9Z-octadecenoyl)-glycerol + CoA. With respect to regulation, acyltransferase activity is specifically inhibited by TMX1 at the endoplasmic reticulum, restricting accumulation of triacylglycerol. In terms of biological role, catalytic subunit of the alternative triglyceride biosynthesis pathway, which mediates formation of triacylglycerol from diacylglycerol and membrane phospholipids. Synthesizes triacylglycerol at the expense of membrane phospholipids, such as phosphatidylcholine (PC) and its ether-linked form (ePC), thereby altering the composition of membranes. The alternative triglyceride biosynthesis pathway is probably required to provide the energy required for rapid growth when fuel sources are limiting. It maintains mitochondrial function during periods of extracellular lipid starvation. Can also use acyl-CoA as donor: acts as a acyl-CoA:monoacylglycerol acyltransferase (MGAT), but also shows acyl-CoA:diacylglycerol acyltransferase (DGAT) activity. The chain is DGAT1/2-independent enzyme synthesizing storage lipids (TMEM68) from Bos taurus (Bovine).